The primary structure comprises 132 residues: MGGVRAVAALAFAGVVGLTFLVLGCALPRYGTWTPMFVITFYVLSPVPLLIARRFQEDMTGTNACIELALFITTGIVISAFALPIVLAHAGTIANSACFLVNTGSVIMFGTIIAYFYLHRDDDSGSWSQSLF.

4 consecutive transmembrane segments (helical) span residues 7–27, 32–52, 68–88, and 98–118; these read VAAL…GCAL, TWTP…LLIA, LALF…IVLA, and CFLV…YFYL.

This sequence belongs to the OB-RGRP/VPS55 family.

The protein localises to the endosome membrane. Functionally, involved in endosomal protein transport. In Caenorhabditis elegans, this protein is Vacuolar protein sorting-associated protein 55 homolog.